Consider the following 468-residue polypeptide: Probable Xaa-Pro aminopeptidase pepP (468 aa).

Asp265, Asp276, Glu399, and Glu439 together coordinate Mn(2+).

It belongs to the peptidase M24B family. Mn(2+) serves as cofactor.

The enzyme catalyses Release of any N-terminal amino acid, including proline, that is linked to proline, even from a dipeptide or tripeptide.. In terms of biological role, catalyzes the removal of a penultimate prolyl residue from the N-termini of peptides. This chain is Probable Xaa-Pro aminopeptidase pepP (pepP), found in Aspergillus fumigatus (strain CBS 144.89 / FGSC A1163 / CEA10) (Neosartorya fumigata).